The following is a 312-amino-acid chain: Acetaldehyde dehydrogenase (312 aa).

NAD(+) is bound at residue 12 to 15 (SGNV). Cys132 (acyl-thioester intermediate) is an active-site residue. NAD(+)-binding positions include 163–171 (SAGPGTRAN) and Asn290.

This sequence belongs to the acetaldehyde dehydrogenase family.

It carries out the reaction acetaldehyde + NAD(+) + CoA = acetyl-CoA + NADH + H(+). This chain is Acetaldehyde dehydrogenase (cbzQ), found in Pseudomonas putida (Arthrobacter siderocapsulatus).